Here is a 339-residue protein sequence, read N- to C-terminus: MVTYSESGVDIDLEAVTVSKLASKLKSTLEYRDIITDSGHYAALVRLGDKAIAMSTDGVGSKILIAEMMNKYDTVGIDCIAMVVNDILCVGAEPIALVDYLAVEQPDPERAEEIAEGLVTGAKESRISIIGGETASLPGIIKDFDLAGTGIGFVDVDKIITGEDIEAGDVLIGIESNGIHSNGYSLARKALFDDAGFSIDDKMPNCDTTIGEELIRPTELYVKPIVALFKEEYDIHGLAHITGGGFTNLRRLKKGVGYDIYDLPEAPEIFKLIYQQNVPLEEMYKVFNMGIGFVVITNENEAEKIMETLKDYCNCQIIGKVTDDEKITVKTFEGSEVTY.

This sequence belongs to the AIR synthase family.

The protein resides in the cytoplasm. The catalysed reaction is 2-formamido-N(1)-(5-O-phospho-beta-D-ribosyl)acetamidine + ATP = 5-amino-1-(5-phospho-beta-D-ribosyl)imidazole + ADP + phosphate + H(+). Its pathway is purine metabolism; IMP biosynthesis via de novo pathway; 5-amino-1-(5-phospho-D-ribosyl)imidazole from N(2)-formyl-N(1)-(5-phospho-D-ribosyl)glycinamide: step 2/2. The protein is Phosphoribosylformylglycinamidine cyclo-ligase of Methanobrevibacter smithii (strain ATCC 35061 / DSM 861 / OCM 144 / PS).